The chain runs to 263 residues: Transcription factor 19-like protein (263 aa).

The FHA domain maps to Tyr31–Leu88. At Ser78 the chain carries Phosphoserine. Disordered stretches follow at residues Ser140–Thr164 and Leu189–Ala225.

It localises to the nucleus. Potential transcription factor that may play a role in the regulation of genes involved in cell cycle G1/S transition. May bind to regulatory elements of genes, including the promoter of the transcription factor FOXO1. The chain is Transcription factor 19-like protein (Tcf19) from Mus musculus (Mouse).